A 396-amino-acid chain; its full sequence is Inositol-tetrakisphosphate 1-kinase (396 aa).

K18 serves as a coordination point for 1D-myo-inositol 1,3,4-trisphosphate. 2 residues coordinate ATP: R106 and K157. In terms of domain architecture, ATP-grasp spans 117–325; that stretch reads ETYMQDERIC…ITTILQRPDQ (209 aa). 1D-myo-inositol 1,3,4-trisphosphate is bound by residues H167 and K199. ATP contacts are provided by residues 188–199, S214, S232, and S236; that span reads QSFISHNAVLYK. Mg(2+)-binding residues include D281, D295, and N297. A 1D-myo-inositol 1,3,4-trisphosphate-binding site is contributed by N297.

This sequence belongs to the ITPK1 family. Monomer. The cofactor is Mg(2+).

It carries out the reaction 1D-myo-inositol 3,4,5,6-tetrakisphosphate + ATP = 1D-myo-inositol 1,3,4,5,6-pentakisphosphate + ADP + H(+). It catalyses the reaction 1D-myo-inositol 1,3,4-trisphosphate + ATP = 1D-myo-inositol 1,3,4,5-tetrakisphosphate + ADP + H(+). The enzyme catalyses 1D-myo-inositol 1,3,4-trisphosphate + ATP = 1D-myo-inositol 1,3,4,6-tetrakisphosphate + ADP + H(+). The catalysed reaction is 1D-myo-inositol 3,4,6-trisphosphate + ATP = 1D-myo-inositol 1,3,4,6-tetrakisphosphate + ADP + H(+). It carries out the reaction 1D-myo-inositol 1,3,4-trisphosphate + 1D-myo-inositol 1,3,4,5,6-pentakisphosphate = 1D-myo-inositol 3,4,5,6-tetrakisphosphate + 1D-myo-inositol 1,3,4,6-tetrakisphosphate. It catalyses the reaction 1D-myo-inositol 1,3,4-trisphosphate + 1D-myo-inositol 1,3,4,5,6-pentakisphosphate = 1D-myo-inositol 3,4,5,6-tetrakisphosphate + 1D-myo-inositol 1,3,4,5-tetrakisphosphate. Functionally, kinase that can phosphorylate various inositol polyphosphate such as Ins(3,4,5,6)P4 or Ins(1,3,4)P3. Phosphorylates Ins(3,4,5,6)P4 at position 1 to form Ins(1,3,4,5,6)P5. This reaction is thought to have regulatory importance, since Ins(3,4,5,6)P4 is an inhibitor of plasma membrane Ca(2+)-activated Cl(-) channels, while Ins(1,3,4,5,6)P5 is not. Also phosphorylates Ins(1,3,4)P3 on O-5 and O-6 to form Ins(1,3,4,6)P4, an essential molecule in the hexakisphosphate (InsP6) pathway. Also acts as an inositol polyphosphate phosphatase that dephosphorylates Ins(1,3,4,5)P4 and Ins(1,3,4,6)P4 to Ins(1,3,4)P3, and Ins(1,3,4,5,6)P5 to Ins(3,4,5,6)P4. May also act as an isomerase that interconverts the inositol tetrakisphosphate isomers Ins(1,3,4,5)P4 and Ins(1,3,4,6)P4 in the presence of ADP and magnesium. Probably acts as the rate-limiting enzyme of the InsP6 pathway. Modifies TNF-alpha-induced apoptosis by interfering with the activation of TNFRSF1A-associated death domain. Plays an important role in MLKL-mediated necroptosis. Produces highly phosphorylated inositol phosphates such as inositolhexakisphosphate (InsP6) which bind to MLKL mediating the release of an N-terminal auto-inhibitory region leading to its activation. Essential for activated phospho-MLKL to oligomerize and localize to the cell membrane during necroptosis. This is Inositol-tetrakisphosphate 1-kinase (itpk1) from Xenopus laevis (African clawed frog).